Consider the following 134-residue polypeptide: Putative protein KRIP1 (134 aa).

The segment at 1 to 134 (MSPVHRSRTS…PDPALPLQML (134 aa)) is disordered. 3 stretches are compositionally biased toward polar residues: residues 9–24 (TSQTQEAHKPTSTLSF), 43–55 (SQPNACSRQSHVS), and 64–79 (CSQSKVSPPGTATNPN). Residues 119-128 (PAKPALPDPA) show a composition bias toward pro residues.

Abundant expression is found in prostate, restricted to cells of epithelial origin in normal and diseased glands. Very low expression is detected in pancreas and ovary.

It localises to the cytoplasm. The protein localises to the nucleus. This is Putative protein KRIP1 (KLKP1) from Homo sapiens (Human).